Here is an 891-residue protein sequence, read N- to C-terminus: DNA mismatch repair protein MutS (891 aa).

Residue 643–650 coordinates ATP; that stretch reads GPNMGGKS.

The protein belongs to the DNA mismatch repair MutS family.

Functionally, this protein is involved in the repair of mismatches in DNA. It is possible that it carries out the mismatch recognition step. This protein has a weak ATPase activity. The protein is DNA mismatch repair protein MutS of Xanthomonas campestris pv. campestris (strain ATCC 33913 / DSM 3586 / NCPPB 528 / LMG 568 / P 25).